Here is a 973-residue protein sequence, read N- to C-terminus: E3 ubiquitin-protein ligase BRE1A (973 aa).

The disordered stretch occupies residues 1-37 (MSGIGNKRAAGEPGTSMPPEKKTAVEDSGTTVETIKL). Lys21 is modified (N6-acetyllysine). The residue at position 41 (Ser41) is a Phosphoserine. The stretch at 43 to 90 (TEELDIRTLQSKNRKLAEMLDQRQAIEDELREHIEKLERRQATDDASL) forms a coiled coil. Residues 128–153 (VVPEPEPDSDSNQERKDDRERGDGQE) are disordered. Phosphoserine is present on residues Ser136 and Ser138. Positions 139-151 (NQERKDDRERGDG) are enriched in basic and acidic residues. Coiled coils occupy residues 168–378 (EEME…VKET) and 429–896 (SLHK…TTKK). 2 positions are modified to N6-acetyllysine: Lys348 and Lys510. Residues 507-620 (DLNKTRLRSG…GKHDDGRKKE (114 aa)) are disordered. Ser522 bears the Phosphoserine mark. Basic and acidic residues-rich tracts occupy residues 527-544 (EDPKDEPTELKQDSEDLA) and 553-620 (SQED…RKKE). Position 560 is a phosphoserine (Ser560). The RING-type zinc finger occupies 920-959 (CPCCNMRKKDAVLTKCFHVFCFECVKTRYDTRQRKCPKCN).

The protein belongs to the BRE1 family. As to quaternary structure, component of the RNF20/40 complex (also known as BRE1 complex) probably composed of 2 copies of RNF20/BRE1A and 2 copies of RNF40/BRE1B. Interacts with UBE2E1/UBCH6. Interacts with p53/TP53 and WAC. Interacts with PAF1; the interaction mediates the association of the PAF1 and RNF20/40 complexes which is a prerequsite for recruitment of UBE2A/B. Interacts with PA2G4. Interacts with FBXL19.

It is found in the nucleus. The catalysed reaction is S-ubiquitinyl-[E2 ubiquitin-conjugating enzyme]-L-cysteine + [acceptor protein]-L-lysine = [E2 ubiquitin-conjugating enzyme]-L-cysteine + N(6)-ubiquitinyl-[acceptor protein]-L-lysine.. It participates in protein modification; protein ubiquitination. Its function is as follows. Component of the RNF20/40 E3 ubiquitin-protein ligase complex that mediates monoubiquitination of 'Lys-120' of histone H2B (H2BK120ub1). H2BK120ub1 gives a specific tag for epigenetic transcriptional activation and is also prerequisite for histone H3 'Lys-4' and 'Lys-79' methylation (H3K4me and H3K79me, respectively). It thereby plays a central role in histone code and gene regulation. The RNF20/40 complex forms a H2B ubiquitin ligase complex in cooperation with the E2 enzyme UBE2A or UBE2B; reports about the cooperation with UBE2E1/UBCH are contradictory. Required for transcriptional activation of Hox genes. Recruited to the MDM2 promoter, probably by being recruited by p53/TP53, and thereby acts as a transcriptional coactivator. Mediates the polyubiquitination of PA2G4 leading to its proteasome-mediated degradation. This is E3 ubiquitin-protein ligase BRE1A (Rnf20) from Mus musculus (Mouse).